Consider the following 363-residue polypeptide: Type-1 angiotensin II receptor B (363 aa).

The Extracellular portion of the chain corresponds to 1-27 (MLSNISAGENSEVEKIVVKCSKSGMHN). Asparagine 4 carries N-linked (GlcNAc...) asparagine glycosylation. Intrachain disulfides connect cysteine 20–cysteine 274 and cysteine 103–cysteine 182. A helical transmembrane segment spans residues 28–57 (YIFITIPIIYSTIFVVGVFGNSLVVIVIYS). Over 58–63 (YMKMKT) the chain is Cytoplasmic. The chain crosses the membrane as a helical span at residues 64–91 (MASVFLMNLALSDLCFVITLPLWAVYTA). Residues 92–100 (MHYHWPFGD) are Extracellular-facing. The helical transmembrane segment at 101–127 (LLCKIASTAITLNLYTTVFLLTCLSID) threads the bilayer. At 128–143 (RYSAIVHPMKSRIRRT) the chain is on the cytoplasmic side. A helical membrane pass occupies residues 144–167 (VMVARLTCVGIWLVAFLASLPSVI). Residues 168 to 192 (YRQIFIFPDTNQTVCALVYHSGHIY) are Extracellular-facing. Arginine 169 lines the angiotensin II pocket. An N-linked (GlcNAc...) asparagine glycan is attached at asparagine 178. Residues tyrosine 186 and lysine 201 each contribute to the angiotensin II site. Residues 193–218 (FMVGMSLVKNIVGFFIPFVIILTSYT) traverse the membrane as a helical segment. Over 219-239 (LIGKTLKEVYRAQRARNDDIF) the chain is Cytoplasmic. A helical transmembrane segment spans residues 240 to 268 (KMIVAVVLLFFFCWIPHQVFTFLDVLIQM). Topologically, residues 269–278 (DVIQNCKMYD) are extracellular. Residues 279–304 (IVDTGMPITICIAYFNSCLNPFLYGF) traverse the membrane as a helical segment. Residues 305–363 (FGKKFRKHFLQLIKYIPPKMRTHASVNTKSSTVSQRLSDTKCASNKIALWIFDIEEHCK) lie on the Cytoplasmic side of the membrane. 2 S-palmitoyl cysteine lipidation sites follow: cysteine 346 and cysteine 362.

This sequence belongs to the G-protein coupled receptor 1 family. Post-translationally, C-terminal Ser or Thr residues may be phosphorylated. In terms of tissue distribution, heart membranes, follicular oocytes.

The protein resides in the cell membrane. In terms of biological role, receptor for angiotensin II, a vasoconstricting peptide, which acts as a key regulator of blood pressure and sodium retention by the kidney. The activated receptor in turn couples to G-alpha proteins G(q) (GNAQ, GNA11, GNA14 or GNA15) and thus activates phospholipase C and increases the cytosolic Ca(2+) concentrations, which in turn triggers cellular responses such as stimulation of protein kinase C. The protein is Type-1 angiotensin II receptor B (agtr1-b) of Xenopus laevis (African clawed frog).